Here is a 732-residue protein sequence, read N- to C-terminus: Zinc/cadmium/lead-transporting P-type ATPase (732 aa).

Topologically, residues 1–124 (MSTPDNHGKK…QAADEPQASR (124 aa)) are cytoplasmic. An HMA domain is found at 48–112 (TRYSWKVSGM…AVQKAGYSLR (65 aa)). The Zn(2+) site is built by Asp58, Cys59, and Cys62. A helical transmembrane segment spans residues 125 to 145 (LKENLPLITLIVMMAISWGLE). Residue Gln146 is a topological domain, periplasmic. A helical transmembrane segment spans residues 147–167 (FNHPFGQLAFIATTLVGLYPI). Over 168–179 (ARQALRLIKSGS) the chain is Cytoplasmic. The chain crosses the membrane as a helical span at residues 180–197 (YFAIETLMSVAAIGALFI). Topologically, residues 198 to 202 (GATAE) are periplasmic. A helical membrane pass occupies residues 203–222 (AAMVLLLFLIGERLEGWAAS). Residues 223 to 356 (RARQGVSALM…IDRFSRIYTP (134 aa)) are Cytoplasmic-facing. Residues 357–377 (AIMAVALLVTLVPPLLFAASW) traverse the membrane as a helical segment. Residues 378-383 (QEWIYK) are Periplasmic-facing. A helical membrane pass occupies residues 384–404 (GLTLLLIGCPCALVISTPAAI). Positions 392 and 394 each coordinate Zn(2+). The Cytoplasmic segment spans residues 405–685 (TSGLAAAARR…RATHANIRQN (281 aa)). Asp436 (4-aspartylphosphate intermediate) is an active-site residue. Residues Asp436, Thr438, and Asp628 each contribute to the Mg(2+) site. Residues 686-702 (ITIALGLKGIFLVTTLL) form a helical membrane-spanning segment. Topologically, residues 703-707 (GMTGL) are periplasmic. The helical transmembrane segment at 708–729 (WLAVLADTGATVLVTANALRLL) threads the bilayer. Asp714 lines the Zn(2+) pocket. Residues 730–732 (RRR) lie on the Cytoplasmic side of the membrane.

The protein belongs to the cation transport ATPase (P-type) (TC 3.A.3) family. Type IB subfamily.

It localises to the cell inner membrane. It carries out the reaction Pb(2+)(in) + ATP + H2O = Pb(2+)(out) + ADP + phosphate + H(+). The catalysed reaction is Zn(2+)(in) + ATP + H2O = Zn(2+)(out) + ADP + phosphate + H(+). It catalyses the reaction Cd(2+)(in) + ATP + H2O = Cd(2+)(out) + ADP + phosphate + H(+). Confers resistance to zinc, cadmium and lead. Couples the hydrolysis of ATP with the export of zinc, cadmium or lead. The protein is Zinc/cadmium/lead-transporting P-type ATPase of Shigella sonnei (strain Ss046).